The chain runs to 369 residues: Cytochrome c-type biogenesis protein CycH (369 aa).

The next 2 helical transmembrane spans lie at 7–23 (FALM…WPLG) and 91–111 (AAAV…YMPL). Topologically, residues 112 to 369 (GSPRLQDFPL…EGLKTLGLDG (258 aa)) are periplasmic.

The protein resides in the cell inner membrane. In terms of biological role, required for the biogenesis of c-type cytochromes. Possible subunit of a heme lyase. This is Cytochrome c-type biogenesis protein CycH (cycH) from Bradyrhizobium diazoefficiens (strain JCM 10833 / BCRC 13528 / IAM 13628 / NBRC 14792 / USDA 110).